Here is a 176-residue protein sequence, read N- to C-terminus: CASP-like protein 5A1 (176 aa).

The Cytoplasmic segment spans residues methionine 1 to threonine 35. Residues leucine 36–methionine 56 form a helical membrane-spanning segment. Residues leucine 57–alanine 67 lie on the Extracellular side of the membrane. The chain crosses the membrane as a helical span at residues phenylalanine 68–isoleucine 88. Residues aspartate 89–serine 102 lie on the Cytoplasmic side of the membrane. Residues leucine 103–alanine 123 traverse the membrane as a helical segment. The Extracellular segment spans residues cysteine 124–threonine 152. Residues alanine 153–leucine 173 form a helical membrane-spanning segment. Residues alanine 174–arginine 176 are Cytoplasmic-facing.

This sequence belongs to the Casparian strip membrane proteins (CASP) family. Homodimer and heterodimers.

It is found in the cell membrane. This chain is CASP-like protein 5A1, found in Ginkgo biloba (Ginkgo).